The chain runs to 327 residues: Putative HTH-type transcriptional regulatory protein MmarC6_0210 (327 aa).

The HTH cro/C1-type domain maps to 128–183; sequence LRETREKLKISVGELAEISRVSRKTIYKYEQNEANPSAEVAIKIEEYLDVPLIKGI. A DNA-binding region (H-T-H motif) is located at residues 139 to 158; sequence VGELAEISRVSRKTIYKYEQ.

The chain is Putative HTH-type transcriptional regulatory protein MmarC6_0210 from Methanococcus maripaludis (strain C6 / ATCC BAA-1332).